The primary structure comprises 50 residues: Large ribosomal subunit protein bL33 (50 aa).

The protein belongs to the bacterial ribosomal protein bL33 family.

In Mycoplasmopsis synoviae (strain 53) (Mycoplasma synoviae), this protein is Large ribosomal subunit protein bL33.